We begin with the raw amino-acid sequence, 162 residues long: Peptidyl-prolyl cis-trans isomerase (162 aa).

In terms of domain architecture, PPIase cyclophilin-type spans 5-161 (FFDVQFGGDA…TTIKIVDSGV (157 aa)).

The protein belongs to the cyclophilin-type PPIase family. PPIase A subfamily.

It carries out the reaction [protein]-peptidylproline (omega=180) = [protein]-peptidylproline (omega=0). Binds cyclosporin A (CsA). CsA mediates some of its effects via an inhibitory action on PPIase. Functionally, PPIases accelerate the folding of proteins. It catalyzes the cis-trans isomerization of proline imidic peptide bonds in oligopeptides. In Paramecium primaurelia, this protein is Peptidyl-prolyl cis-trans isomerase.